A 171-amino-acid polypeptide reads, in one-letter code: Shikimate kinase (171 aa).

Position 14–19 (14–19 (GAGKST)) interacts with ATP. S18 serves as a coordination point for Mg(2+). Substrate is bound by residues D36, R60, and G82. R120 contacts ATP. R139 is a binding site for substrate. Q156 contacts ATP.

The protein belongs to the shikimate kinase family. In terms of assembly, monomer. Requires Mg(2+) as cofactor.

Its subcellular location is the cytoplasm. It catalyses the reaction shikimate + ATP = 3-phosphoshikimate + ADP + H(+). It functions in the pathway metabolic intermediate biosynthesis; chorismate biosynthesis; chorismate from D-erythrose 4-phosphate and phosphoenolpyruvate: step 5/7. In terms of biological role, catalyzes the specific phosphorylation of the 3-hydroxyl group of shikimic acid using ATP as a cosubstrate. This is Shikimate kinase from Alteromonas mediterranea (strain DSM 17117 / CIP 110805 / LMG 28347 / Deep ecotype).